Consider the following 216-residue polypeptide: Somatotropin (216 aa).

Positions 1 to 26 are cleaved as a signal peptide; it reads MATDSRTSWLLTVSLLCLLWPQEASA. Histidine 45 lines the Zn(2+) pocket. Residues cysteine 78 and cysteine 189 are joined by a disulfide bond. Position 131 is a phosphoserine (serine 131). Glutamate 198 contacts Zn(2+). Residues cysteine 206 and cysteine 214 are joined by a disulfide bond.

It belongs to the somatotropin/prolactin family.

The protein localises to the secreted. Plays an important role in growth control. Its major role in stimulating body growth is to stimulate the liver and other tissues to secrete IGF1. It stimulates both the differentiation and proliferation of myoblasts. It also stimulates amino acid uptake and protein synthesis in muscle and other tissues. The sequence is that of Somatotropin (Gh1) from Mus musculus (Mouse).